Here is a 440-residue protein sequence, read N- to C-terminus: Dihydrolipoyllysine-residue acetyltransferase component of pyruvate dehydrogenase complex (440 aa).

One can recognise a Lipoyl-binding domain in the interval 2–78; it reads SIEVKMPALS…AVGQVIAVMA (77 aa). Lys43 is subject to N6-lipoyllysine. The interval 91–113 is disordered; it reads ASSQISEPSEKADVAQKETADSE. A compositionally biased stretch (basic and acidic residues) spans 98-110; it reads PSEKADVAQKETA. A Peripheral subunit-binding (PSBD) domain is found at 149-186; sequence KASPLAKRLAKKNHVDLKQVNGSGPHGRIIKADIEAFI. Over residues 192 to 202 the composition is skewed to polar residues; the sequence is ASSNPSVSTPE. The segment at 192–214 is disordered; the sequence is ASSNPSVSTPEASGKITHDTPHN. His412 is a catalytic residue.

It belongs to the 2-oxoacid dehydrogenase family. Forms a 24-polypeptide structural core with octahedral symmetry. It depends on (R)-lipoate as a cofactor.

The enzyme catalyses N(6)-[(R)-dihydrolipoyl]-L-lysyl-[protein] + acetyl-CoA = N(6)-[(R)-S(8)-acetyldihydrolipoyl]-L-lysyl-[protein] + CoA. Functionally, the pyruvate dehydrogenase complex catalyzes the overall conversion of pyruvate to acetyl-CoA and CO(2). It contains multiple copies of three enzymatic components: pyruvate dehydrogenase (E1), dihydrolipoamide acetyltransferase (E2) and lipoamide dehydrogenase (E3). The protein is Dihydrolipoyllysine-residue acetyltransferase component of pyruvate dehydrogenase complex (pdhC) of Zymomonas mobilis subsp. mobilis (strain ATCC 31821 / ZM4 / CP4).